The sequence spans 185 residues: Pre-histone-like nucleoprotein (185 aa).

An N-acetylserine; by host modification is found at Ser-2. A propeptide spanning residues Ser-2–Gly-23 is cleaved from the precursor. Phosphothreonine; by host is present on Thr-55. Position 172 is a phosphoserine; by host (Ser-172). Positions Arg-175–Ser-185 match the Nuclear localization signal motif.

The protein belongs to the adenoviridae histone-like nucleoprotein family. Interacts with the core-capsid bridging protein; this interaction bridges the virus core to the capsid. Interacts with host NPM1; this interaction might play a role in placing the pre-histone-like nucleoprotein on the viral DNA or regulating viral gene expression. Interacts with host HMGB1; this interaction inhibits host immune response. In terms of processing, cleaved near the N-terminus by the viral protease during virion maturation to form the mature protein.

The protein localises to the virion. Its subcellular location is the host nucleus. The protein resides in the host nucleolus. In terms of biological role, plays a role in the inhibition of host immune response within the nucleus. Interacts with cellular nucleosomes and immobilizes the host immune danger signal HMGB1 on chromatin. In turn, prevents HMGB1 release out of the cell and thus decreases inflammation. Also plays a role in the wrapping and condensation of the viral DNA. May also promote viral genome import into the nucleus. The chain is Pre-histone-like nucleoprotein from Human adenovirus F serotype 40 (HAdV-40).